Here is a 165-residue protein sequence, read N- to C-terminus: Large ribosomal subunit protein uL10 (165 aa).

It belongs to the universal ribosomal protein uL10 family. As to quaternary structure, part of the ribosomal stalk of the 50S ribosomal subunit. The N-terminus interacts with L11 and the large rRNA to form the base of the stalk. The C-terminus forms an elongated spine to which L12 dimers bind in a sequential fashion forming a multimeric L10(L12)X complex.

In terms of biological role, forms part of the ribosomal stalk, playing a central role in the interaction of the ribosome with GTP-bound translation factors. The sequence is that of Large ribosomal subunit protein uL10 from Enterobacter sp. (strain 638).